A 78-amino-acid polypeptide reads, in one-letter code: Omega-conotoxin-like Ac6.5 (78 aa).

Residues 1 to 22 form the signal peptide; sequence MKLTCVVIVAVLLLTACQLLTA. Residues 23 to 42 constitute a propeptide that is removed on maturation; it reads DDSRGTQKHRSLRSTTKVSK. 3 disulfide bridges follow: Cys46–Cys62, Cys53–Cys65, and Cys61–Cys72. A 4-hydroxyproline mark is found at Pro55 and Pro67.

Belongs to the conotoxin O1 superfamily. As to expression, expressed by the venom duct.

It is found in the secreted. Omega-conotoxins act at presynaptic membranes, they bind and block voltage-gated calcium channels (Cav). The sequence is that of Omega-conotoxin-like Ac6.5 from Conus achatinus (Little frog cone).